Reading from the N-terminus, the 192-residue chain is MSLSINAVARTQEGKGASRRLRNEGLVPAVIYGGETAPVSISFKDNELLKAVGTPGFLTGLVEVTVEGKTEQVLVKALQRHPSTGAVMHMDLQRAQADKAITTRVPLSFINAAQSEGVSKQGGRLTVESKLAEVRCLPANLPEVLTVDVIKGQLDQIFHLSDVILPEGVELVSLLKGEDHDQPIARIGKSKR.

This sequence belongs to the bacterial ribosomal protein bL25 family. CTC subfamily. As to quaternary structure, part of the 50S ribosomal subunit; part of the 5S rRNA/L5/L18/L25 subcomplex. Contacts the 5S rRNA. Binds to the 5S rRNA independently of L5 and L18.

This is one of the proteins that binds to the 5S RNA in the ribosome where it forms part of the central protuberance. The protein is Large ribosomal subunit protein bL25 of Marinomonas sp. (strain MWYL1).